The chain runs to 890 residues: Tyrosine-protein kinase receptor TYRO3 (890 aa).

The first 40 residues, 1 to 40, serve as a signal peptide directing secretion; it reads MALRRSMGRPGLPPLPLPPPPRLGLLLAALASLLLPESAA. 2 consecutive Ig-like C2-type domains span residues 41 to 128 and 139 to 220; these read AGLK…TEIS and PFFT…ATVH. Residues 41–429 lie on the Extracellular side of the membrane; it reads AGLKLMGAPV…QGPPHSRTSW (389 aa). N-linked (GlcNAc...) asparagine glycosylation occurs at Asn63. 2 disulfide bridges follow: Cys64-Cys117 and Cys160-Cys203. N-linked (GlcNAc...) asparagine glycans are attached at residues Asn191, Asn230, Asn240, Asn293, Asn366, and Asn380. Fibronectin type-III domains follow at residues 227-320 and 325-416; these read APFN…TKGL and APQN…SHDR. The helical transmembrane segment at 430-450 threads the bilayer; that stretch reads VPVVLGVLTALVTAAALALIL. At 451–890 the chain is on the cytoplasmic side; that stretch reads LRKRRKETRF…QQGLLPHSSC (440 aa). The residue at position 466 (Ser466) is a Phosphoserine. The Protein kinase domain maps to 518 to 790; sequence FTLGRMLGKG…CLRMELENIL (273 aa). Residues 524-532 and Lys550 each bind ATP; that span reads LGKGEFGSV. Asp655 (proton acceptor) is an active-site residue. 4 positions are modified to phosphotyrosine; by autocatalysis: Tyr681, Tyr685, Tyr686, and Tyr804. Disordered regions lie at residues 815 to 837 and 851 to 871; these read AGGSLELPGRDQPYSGAGDGSGM and LTPGGLAEQPGQAEHQPESPL. 2 positions are modified to phosphoserine: Ser818 and Ser869.

It belongs to the protein kinase superfamily. Tyr protein kinase family. AXL/UFO subfamily. As to quaternary structure, monomer and homodimer. Interacts (via N-terminus) with extracellular ligands TULP1 and GAS6. Interacts with PIK3R1; this interaction increases PI3-kinase activity. Post-translationally, autophosphorylated. In terms of tissue distribution, abundant in the brain and lower levels in other tissues.

The protein resides in the cell membrane. It carries out the reaction L-tyrosyl-[protein] + ATP = O-phospho-L-tyrosyl-[protein] + ADP + H(+). Receptor tyrosine kinase that transduces signals from the extracellular matrix into the cytoplasm by binding to several ligands including TULP1 or GAS6. Regulates many physiological processes including cell survival, migration and differentiation. Ligand binding at the cell surface induces dimerization and autophosphorylation of TYRO3 on its intracellular domain that provides docking sites for downstream signaling molecules. Following activation by ligand, interacts with PIK3R1 and thereby enhances PI3-kinase activity. Activates the AKT survival pathway, including nuclear translocation of NF-kappa-B and up-regulation of transcription of NF-kappa-B-regulated genes. TYRO3 signaling plays a role in various processes such as neuron protection from excitotoxic injury, platelet aggregation and cytoskeleton reorganization. Also plays an important role in inhibition of Toll-like receptors (TLRs)-mediated innate immune response by activating STAT1, which selectively induces production of suppressors of cytokine signaling SOCS1 and SOCS3. Functionally, (Microbial infection) Acts as a receptor for lassa virus and lymphocytic choriomeningitis virus, possibly through GAS6 binding to phosphatidyl-serine at the surface of virion envelope. In terms of biological role, (Microbial infection) Acts as a receptor for Ebolavirus, possibly through GAS6 binding to phosphatidyl-serine at the surface of virion envelope. The sequence is that of Tyrosine-protein kinase receptor TYRO3 (TYRO3) from Homo sapiens (Human).